Consider the following 146-residue polypeptide: Ribonuclease H (146 aa).

Residues 1-143 (MQKKITIYTD…CDELARQAIQ (143 aa)) enclose the RNase H type-1 domain. 4 residues coordinate Mg(2+): D10, E48, D70, and D135.

Belongs to the RNase H family. In terms of assembly, monomer. Requires Mg(2+) as cofactor.

It localises to the cytoplasm. It carries out the reaction Endonucleolytic cleavage to 5'-phosphomonoester.. Functionally, endonuclease that specifically degrades the RNA of RNA-DNA hybrids. This chain is Ribonuclease H, found in Chlorobium luteolum (strain DSM 273 / BCRC 81028 / 2530) (Pelodictyon luteolum).